Here is a 137-residue protein sequence, read N- to C-terminus: Large ribosomal subunit protein uL22c (137 aa).

The protein belongs to the universal ribosomal protein uL22 family. In terms of assembly, part of the 50S ribosomal subunit.

Its subcellular location is the plastid. The protein resides in the chloroplast. This protein binds specifically to 23S rRNA. In terms of biological role, the globular domain of the protein is located near the polypeptide exit tunnel on the outside of the subunit, while an extended beta-hairpin is found that lines the wall of the exit tunnel in the center of the 70S ribosome. This is Large ribosomal subunit protein uL22c (rpl22) from Oenothera argillicola (Appalachian evening primrose).